The chain runs to 249 residues: MIDWESLRAIVLDIEGTTCPVDFVTGSLFPYARQHLGTLLSQDDQQAPLKPLLDEVRIAWKHENSAEAPAYSDSQDPLALLPYLQWLIDQDRKLAPLKELQGLTWRHGYQSGALTTPLFADVAPALKRWQQRGLRLAVYSSGSVAAQQLFYGHTSDGDLSDLFERWYDTRLGPKNEAQSYTLLAADLQLPAHAVLFISDSSGELAAAQAAGLQICGSQRPGNPETLSAKWPVVVSSLEALAPSGPPGLR.

This sequence belongs to the HAD-like hydrolase superfamily. MasA/MtnC family. Monomer. The cofactor is Mg(2+).

The catalysed reaction is 5-methylsulfanyl-2,3-dioxopentyl phosphate + H2O = 1,2-dihydroxy-5-(methylsulfanyl)pent-1-en-3-one + phosphate. The protein operates within amino-acid biosynthesis; L-methionine biosynthesis via salvage pathway; L-methionine from S-methyl-5-thio-alpha-D-ribose 1-phosphate: step 3/6. Its pathway is amino-acid biosynthesis; L-methionine biosynthesis via salvage pathway; L-methionine from S-methyl-5-thio-alpha-D-ribose 1-phosphate: step 4/6. Functionally, bifunctional enzyme that catalyzes the enolization of 2,3-diketo-5-methylthiopentyl-1-phosphate (DK-MTP-1-P) into the intermediate 2-hydroxy-3-keto-5-methylthiopentenyl-1-phosphate (HK-MTPenyl-1-P), which is then dephosphorylated to form the acireductone 1,2-dihydroxy-3-keto-5-methylthiopentene (DHK-MTPene). This is Enolase-phosphatase E1 from Synechococcus sp. (strain RCC307).